A 670-amino-acid polypeptide reads, in one-letter code: DNA ligase (670 aa).

Residues 32 to 36 (DSEYD), 81 to 82 (SL), and Glu114 each bind NAD(+). The active-site N6-AMP-lysine intermediate is Lys116. The NAD(+) site is built by Arg137, Glu174, Lys291, and Lys315. Cys409, Cys412, Cys427, and Cys433 together coordinate Zn(2+). Residues 592–670 (ASENLFKDKT…EEEFLAQITR (79 aa)) enclose the BRCT domain.

This sequence belongs to the NAD-dependent DNA ligase family. LigA subfamily. Requires Mg(2+) as cofactor. Mn(2+) serves as cofactor.

The catalysed reaction is NAD(+) + (deoxyribonucleotide)n-3'-hydroxyl + 5'-phospho-(deoxyribonucleotide)m = (deoxyribonucleotide)n+m + AMP + beta-nicotinamide D-nucleotide.. Its function is as follows. DNA ligase that catalyzes the formation of phosphodiester linkages between 5'-phosphoryl and 3'-hydroxyl groups in double-stranded DNA using NAD as a coenzyme and as the energy source for the reaction. It is essential for DNA replication and repair of damaged DNA. The chain is DNA ligase from Haemophilus influenzae (strain PittEE).